We begin with the raw amino-acid sequence, 297 residues long: Mitochondrial nicotinamide adenine dinucleotide transporter SLC25A52 (297 aa).

Solcar repeat units follow at residues 28–108, 116–200, and 209–296; these read VGEM…LSCL, PEFA…IKEH, and AHLV…LLKF. Transmembrane regions (helical) follow at residues 34–51, 85–105, 118–138, 179–199, 215–235, and 268–289; these read YLCG…TYPI, LPPL…YEDL, FATH…FTPL, ILFR…PIKE, FIGG…INVV, and LFRG…INAT.

The protein belongs to the mitochondrial carrier (TC 2.A.29) family.

The protein resides in the mitochondrion inner membrane. The enzyme catalyses NAD(+)(in) = NAD(+)(out). In terms of biological role, mitochondrial membrane carrier protein that mediates the import of NAD(+) into mitochondria. Compared to SLC25A51, SLC25A52-mediated transport is not essential for the import of NAD(+) in mitochondria. The transport mechanism, uniport or antiport, its electrogenicity and substrate selectivity, remain to be elucidated. This is Mitochondrial nicotinamide adenine dinucleotide transporter SLC25A52 from Homo sapiens (Human).